We begin with the raw amino-acid sequence, 438 residues long: Probable exopolygalacturonase B (438 aa).

A signal peptide spans 1 to 15 (MYLLPLTLFLTAAFG). Asparagine 118, asparagine 185, and asparagine 225 each carry an N-linked (GlcNAc...) asparagine glycan. One copy of the PbH1 1 repeat lies at 209 to 248 (TNDVSFDNVYIHAFSTNASSDPANTDGMDSLDVDGVSFTN). The active-site Proton donor is aspartate 255. Cysteines 257 and 274 form a disulfide. Asparagine 263 and asparagine 275 each carry an N-linked (GlcNAc...) asparagine glycan. Histidine 278 is an active-site residue. PbH1 repeat units lie at residues 295–316 (IENV…RLKA) and 327–348 (INNV…VLDQ). N-linked (GlcNAc...) asparagine glycans are attached at residues asparagine 302, asparagine 329, asparagine 354, and asparagine 366. A disulfide bond links cysteine 392 and cysteine 398. The PbH1 4 repeat unit spans residues 398 to 430 (CTNITLSNVNLTSPKGTAEIVCDDIQGGIGVDC). N-linked (GlcNAc...) asparagine glycans are attached at residues asparagine 400 and asparagine 407.

This sequence belongs to the glycosyl hydrolase 28 family.

It is found in the secreted. It catalyses the reaction [(1-&gt;4)-alpha-D-galacturonosyl](n) + H2O = alpha-D-galacturonate + [(1-&gt;4)-alpha-D-galacturonosyl](n-1). In terms of biological role, specific in hydrolyzing the terminal glycosidic bond of polygalacturonic acid and oligogalacturonates. The protein is Probable exopolygalacturonase B (pgxB) of Aspergillus niger (strain ATCC MYA-4892 / CBS 513.88 / FGSC A1513).